The sequence spans 188 residues: Protein-arginine kinase activator protein (188 aa).

4 consecutive short sequence motifs (CXXC metal binding motif) follow at residues 3-6, 29-32, 87-90, and 105-108; these read CENC, CQTC, CPSC, and CANC. Residues 145-180 enclose the UVR domain; it reads KRKIEEKNEYLKKLIEIQDFEEAAIVRDEIKALKAE.

Interacts with McsB and CtsR; the CXXC motifs are needed for the binding.

Its function is as follows. Activates the phosphorylation activity of the protein-arginine kinase McsB. May function as an important molecule for oxidative tolerance in various types of stress including that of heavy metals. Binds to Cu(2+), Zn(2+), Co(2+) and Cd(2+) via its CXXC metal binding motifs. This chain is Protein-arginine kinase activator protein, found in Staphylococcus aureus (strain NCTC 8325 / PS 47).